A 782-amino-acid polypeptide reads, in one-letter code: Tripartite terminase subunit 1 (782 aa).

The segment at 190–218 adopts a C3H1-type zinc-finger fold; that stretch reads CLQCYEELAAVPNQGRSILKRLRGLLCDH. 666–673 is an ATP binding site; the sequence is YNEAFGKE. A compositionally biased stretch (pro residues) spans 727–740; the sequence is APPPPAAPSPPPAE. Residues 727–754 are disordered; sequence APPPPAAPSPPPAEPATTAGASRKRPAV.

The protein belongs to the herpesviridae TRM1 protein family. As to quaternary structure, associates with TRM2 and TRM3 to form the tripartite terminase complex. Interacts with portal protein.

It is found in the host nucleus. Component of the molecular motor that translocates viral genomic DNA in empty capsid during DNA packaging. Forms a tripartite terminase complex together with TRM2 and TRM3 in the host cytoplasm. Once the complex reaches the host nucleus, it interacts with the capsid portal vertex. This portal forms a ring in which genomic DNA is translocated into the capsid. TRM1 carries an endonuclease activity that plays an important role for the cleavage of concatemeric viral DNA into unit length genomes. The sequence is that of Tripartite terminase subunit 1 from Tupaiid herpesvirus (strain 2) (TuHV-2).